The chain runs to 218 residues: Small ribosomal subunit protein uS3 (218 aa).

Positions 38–106 (IREYISKRLS…RVHINILEIK (69 aa)) constitute a KH type-2 domain.

It belongs to the universal ribosomal protein uS3 family. In terms of assembly, part of the 30S ribosomal subunit. Forms a tight complex with proteins S10 and S14.

Functionally, binds the lower part of the 30S subunit head. Binds mRNA in the 70S ribosome, positioning it for translation. This is Small ribosomal subunit protein uS3 from Bacillus subtilis (strain 168).